A 179-amino-acid polypeptide reads, in one-letter code: Large ribosomal subunit protein uL5 (179 aa).

This sequence belongs to the universal ribosomal protein uL5 family. Part of the 50S ribosomal subunit; part of the 5S rRNA/L5/L18/L25 subcomplex. Contacts the 5S rRNA and the P site tRNA. Forms a bridge to the 30S subunit in the 70S ribosome.

In terms of biological role, this is one of the proteins that bind and probably mediate the attachment of the 5S RNA into the large ribosomal subunit, where it forms part of the central protuberance. In the 70S ribosome it contacts protein S13 of the 30S subunit (bridge B1b), connecting the 2 subunits; this bridge is implicated in subunit movement. Contacts the P site tRNA; the 5S rRNA and some of its associated proteins might help stabilize positioning of ribosome-bound tRNAs. In Geotalea uraniireducens (strain Rf4) (Geobacter uraniireducens), this protein is Large ribosomal subunit protein uL5.